The sequence spans 363 residues: DNA replication and repair protein RecF (363 aa).

An ATP-binding site is contributed by 31–38; sequence GANSSGKT.

This sequence belongs to the RecF family.

The protein resides in the cytoplasm. The RecF protein is involved in DNA metabolism; it is required for DNA replication and normal SOS inducibility. RecF binds preferentially to single-stranded, linear DNA. It also seems to bind ATP. The sequence is that of DNA replication and repair protein RecF from Nitrosococcus oceani (strain ATCC 19707 / BCRC 17464 / JCM 30415 / NCIMB 11848 / C-107).